The chain runs to 390 residues: MTRFLICSFALVLLYPAGIDMYLVGLPRIAADLNASEAQLHIAFSVYLAGMATAMLFAGKVADQSGRKPVAIAGAVIFIIASMLCSRATDGSLFLTGRFIQGIGAGCCYVVAFAILRDTLDDRRRAKVLSLLNGITCIVPVLAPVLGHLIMLKFPWQSLFYTMIAMGIAVCLLSVFILKETRPATCSSTSRPQQNAESLLNRFFLSRLAITTLSVSVILTFVNTSPVLLMEMMGFDRGEYATTMALTAGISMAVSFSTPFALSVFKPRTLMLTSQGLFLAAGIVLSLSSSHAVTLFGLTLICAGFSVGFGVAMSQALGPFSLRAGVASSVLGIAQVCGSSLWIWLAAVIGFNALNMLIGILIGCSMVCILLLMTIQPAAHYEKIHHQSRS.

The next 12 helical transmembrane spans lie at 4 to 24 (FLIC…MYLV), 42 to 62 (IAFS…GKVA), 69 to 89 (PVAI…SRAT), 93 to 113 (LFLT…VVAF), 131 to 151 (LLNG…HLIM), 158 to 178 (SLFY…VFIL), 199 to 221 (LLNR…ILTF), 245 to 265 (ALTA…LSVF), 269 to 289 (TLML…SLSS), 293 to 313 (VTLF…GVAM), 316 to 336 (ALGP…IAQV), and 353 to 375 (ALNM…LMTI).

This sequence belongs to the major facilitator superfamily. DHA1 family. MdtL (TC 2.A.1.2.22) subfamily.

The protein resides in the cell inner membrane. This chain is Multidrug resistance protein MdtL, found in Citrobacter koseri (strain ATCC BAA-895 / CDC 4225-83 / SGSC4696).